A 334-amino-acid chain; its full sequence is MLEIDGSFGEGGGQILRSSLALSSLTGKGFRIRGIRAKRKNPGLQPQHLTSVRVMKMLTNARVSGDYLGSTELEFEPGEVVEGSFTVDVGTAGSVSLIAMTAIPLMINRRISLRIRGGTDVPLSPPVDYMRLVFIPLLEKMGITGKIEVKRRGHYPEGGGEVEVYGFRGEPRDLVLDSFGELREITGVSHVTSLPAHIAKRQIQGVMEVLREFNVPVKVEEEVSNEGSRGTGIVLSAHGLSIMGASSLGEKGITAENVGRKAGTELLKELKTGAAVDSHMGDMLVTFSAFANLEYTGSLLTQHTETNIEVIRKFLEIDVKIEGRSPFKLRLKRK.

H279–D282 contacts ATP. The active-site Tele-AMP-histidine intermediate is H303.

This sequence belongs to the RNA 3'-terminal cyclase family. Type 1 subfamily.

The protein localises to the cytoplasm. It carries out the reaction a 3'-end 3'-phospho-ribonucleotide-RNA + ATP = a 3'-end 2',3'-cyclophospho-ribonucleotide-RNA + AMP + diphosphate. Its function is as follows. Catalyzes the conversion of 3'-phosphate to a 2',3'-cyclic phosphodiester at the end of RNA. The mechanism of action of the enzyme occurs in 3 steps: (A) adenylation of the enzyme by ATP; (B) transfer of adenylate to an RNA-N3'P to produce RNA-N3'PP5'A; (C) and attack of the adjacent 2'-hydroxyl on the 3'-phosphorus in the diester linkage to produce the cyclic end product. The biological role of this enzyme is unknown but it is likely to function in some aspects of cellular RNA processing. The chain is RNA 3'-terminal phosphate cyclase from Metallosphaera sedula (strain ATCC 51363 / DSM 5348 / JCM 9185 / NBRC 15509 / TH2).